Reading from the N-terminus, the 154-residue chain is Protein X (154 aa).

Positions R26–V45 are disordered. Low complexity predominate over residues S31–S43. Positions P68–F117 are mitochondrial targeting sequence.

This sequence belongs to the orthohepadnavirus protein X family. May form homodimer. May interact with host CEBPA, CFLAR, CREB1, DDB1, E4F1, HBXIP, HSPD1/HSP60, NFKBIA, POLR2E and SMAD4. Interacts with host SMC5-SMC6 complex and induces its degradation. Interacts with host TRPC4AP; leading to prevent ubiquitination of TRPC4AP. Interacts with host PLSCR1; this interaction promotes ubiquitination and degradation of HBx and impairs HBx-mediated cell proliferation. Post-translationally, a fraction may be phosphorylated in insect cells and HepG2 cells, a human hepatoblastoma cell line. Phosphorylated in vitro by host protein kinase C or mitogen-activated protein kinase. N-acetylated in insect cells.

The protein resides in the host cytoplasm. It localises to the host nucleus. It is found in the host mitochondrion. In terms of biological role, multifunctional protein that plays a role in silencing host antiviral defenses and promoting viral transcription. Does not seem to be essential for HBV infection. May be directly involved in development of cirrhosis and liver cancer (hepatocellular carcinoma). Most of cytosolic activities involve modulation of cytosolic calcium. The effect on apoptosis is controversial depending on the cell types in which the studies have been conducted. May induce apoptosis by localizing in mitochondria and causing loss of mitochondrial membrane potential. May also modulate apoptosis by binding host CFLAR, a key regulator of the death-inducing signaling complex (DISC). Promotes viral transcription by using the host E3 ubiquitin ligase DDB1 to target the SMC5-SMC6 complex to proteasomal degradation. This host complex would otherwise bind to viral episomal DNA, and prevents its transcription. Moderately stimulates transcription of many different viral and cellular transcription elements. Promoters and enhancers stimulated by HBx contain DNA binding sites for NF-kappa-B, AP-1, AP-2, c-EBP, ATF/CREB, or the calcium-activated factor NF-AT. The chain is Protein X from Hepatitis B virus genotype D subtype ayw (isolate Japan/JYW796/1988) (HBV-D).